We begin with the raw amino-acid sequence, 812 residues long: ATP-dependent zinc metalloprotease FtsH (812 aa).

The Cytoplasmic portion of the chain corresponds to 1–21 (MPPSPPRPPKFPGSGRPESPN). The helical transmembrane segment at 22–42 (WGVWVMVLLIVGVLAFGFFTP) threads the bilayer. Over 43–241 (ESFGLGPRKE…TKFKRESGSW (199 aa)) the chain is Extracellular. The helical transmembrane segment at 242 to 262 (GGILLNLLPIVLILVILFFMF) threads the bilayer. Residues 263-812 (RAQSGGARGA…EFGKDGGEKK (550 aa)) lie on the Cytoplasmic side of the membrane. 333–340 (GAPGTGKT) provides a ligand contact to ATP. His-555 provides a ligand contact to Zn(2+). Residue Glu-556 is part of the active site. 2 residues coordinate Zn(2+): His-559 and Asp-631. Residues 739–812 (KNPPARVTPP…EFGKDGGEKK (74 aa)) form a disordered region. Basic and acidic residues-rich tracts occupy residues 757-785 (QPGK…RKME) and 803-812 (EFGKDGGEKK).

It in the central section; belongs to the AAA ATPase family. This sequence in the C-terminal section; belongs to the peptidase M41 family. Homohexamer. Zn(2+) is required as a cofactor.

The protein localises to the cell membrane. Acts as a processive, ATP-dependent zinc metallopeptidase for both cytoplasmic and membrane proteins. Plays a role in the quality control of integral membrane proteins. This chain is ATP-dependent zinc metalloprotease FtsH, found in Akkermansia muciniphila (strain ATCC BAA-835 / DSM 22959 / JCM 33894 / BCRC 81048 / CCUG 64013 / CIP 107961 / Muc).